A 272-amino-acid chain; its full sequence is Sulfate transporter CysZ (272 aa).

Helical transmembrane passes span 29-49, 66-86, 148-168, and 219-239; these read FVIM…WLFI, WLSF…LLLF, IIAL…VPVL, and FVPV…TLMW.

It belongs to the CysZ family.

Its subcellular location is the cell inner membrane. Its function is as follows. High affinity, high specificity proton-dependent sulfate transporter, which mediates sulfate uptake. Provides the sulfur source for the cysteine synthesis pathway. This is Sulfate transporter CysZ from Haemophilus influenzae (strain PittGG).